The sequence spans 188 residues: MEDEIRAFCQTAADCFIRLGDCAPAIAEAAGVVTASLRAGGKVMFCGNGGSAADAQHLAAELEGRYLKERAPLPGMALTTNTSTLTAVGNDYGFDHIFSRQVSAHGRPGDVLVALSTSGNSANVLKAIEAAREKGVSVIGLTGAGGGKMAEVCDLCIRVPSTQTPQIQQMHIAVGHLLCGLVEDALCS.

Positions 33–188 (VTASLRAGGK…CGLVEDALCS (156 aa)) constitute an SIS domain. 48 to 50 (NGG) contributes to the substrate binding site. The Zn(2+) site is built by histidine 57 and glutamate 61. Substrate-binding positions include glutamate 61, 90–91 (ND), 116–118 (STS), serine 121, and glutamine 168. The Zn(2+) site is built by glutamine 168 and histidine 176.

Belongs to the SIS family. GmhA subfamily. In terms of assembly, homotetramer. The cofactor is Zn(2+).

The protein localises to the cytoplasm. The catalysed reaction is 2 D-sedoheptulose 7-phosphate = D-glycero-alpha-D-manno-heptose 7-phosphate + D-glycero-beta-D-manno-heptose 7-phosphate. It functions in the pathway carbohydrate biosynthesis; D-glycero-D-manno-heptose 7-phosphate biosynthesis; D-glycero-alpha-D-manno-heptose 7-phosphate and D-glycero-beta-D-manno-heptose 7-phosphate from sedoheptulose 7-phosphate: step 1/1. Its function is as follows. Catalyzes the isomerization of sedoheptulose 7-phosphate in D-glycero-D-manno-heptose 7-phosphate. In Rhodospirillum rubrum (strain ATCC 11170 / ATH 1.1.1 / DSM 467 / LMG 4362 / NCIMB 8255 / S1), this protein is Phosphoheptose isomerase.